We begin with the raw amino-acid sequence, 470 residues long: UDP-N-acetylmuramate--L-alanine ligase (470 aa).

Residue 118-124 participates in ATP binding; the sequence is GTHGKTT.

Belongs to the MurCDEF family.

The protein resides in the cytoplasm. The enzyme catalyses UDP-N-acetyl-alpha-D-muramate + L-alanine + ATP = UDP-N-acetyl-alpha-D-muramoyl-L-alanine + ADP + phosphate + H(+). The protein operates within cell wall biogenesis; peptidoglycan biosynthesis. Cell wall formation. The sequence is that of UDP-N-acetylmuramate--L-alanine ligase from Cereibacter sphaeroides (strain KD131 / KCTC 12085) (Rhodobacter sphaeroides).